The following is a 308-amino-acid chain: Protein translocase subunit SecF (308 aa).

6 consecutive transmembrane segments (helical) span residues 12–32, 127–147, 152–172, 182–202, 234–254, and 262–282; these read YFIF…TKGF, AKNA…YITI, IYAL…IGFI, PFIA…IVIF, VYTS…GGST, and LLVG…PLVY.

The protein belongs to the SecD/SecF family. SecF subfamily. Forms a complex with SecD. Part of the essential Sec protein translocation apparatus which comprises SecA, SecYEG and auxiliary proteins SecDF. Other proteins may also be involved.

It is found in the cell inner membrane. Functionally, part of the Sec protein translocase complex. Interacts with the SecYEG preprotein conducting channel. SecDF uses the proton motive force (PMF) to complete protein translocation after the ATP-dependent function of SecA. The chain is Protein translocase subunit SecF from Sebaldella termitidis (strain ATCC 33386 / NCTC 11300).